Here is a 274-residue protein sequence, read N- to C-terminus: 2-dehydro-3-deoxyphosphooctonate aldolase (274 aa).

This sequence belongs to the KdsA family.

The protein localises to the cytoplasm. The catalysed reaction is D-arabinose 5-phosphate + phosphoenolpyruvate + H2O = 3-deoxy-alpha-D-manno-2-octulosonate-8-phosphate + phosphate. Its pathway is carbohydrate biosynthesis; 3-deoxy-D-manno-octulosonate biosynthesis; 3-deoxy-D-manno-octulosonate from D-ribulose 5-phosphate: step 2/3. It participates in bacterial outer membrane biogenesis; lipopolysaccharide biosynthesis. The polypeptide is 2-dehydro-3-deoxyphosphooctonate aldolase (Rickettsia felis (strain ATCC VR-1525 / URRWXCal2) (Rickettsia azadi)).